Reading from the N-terminus, the 762-residue chain is Multifunctional tryptophan biosynthesis protein (762 aa).

In terms of domain architecture, Glutamine amidotransferase type-1 spans 25-224; sequence NLILIDNYDS…LHMQGGTWAE (200 aa). 76–78 contributes to the L-glutamine binding site; the sequence is GPG. Cysteine 104 (nucleophile; for GATase activity) is an active-site residue. Residues glutamine 108 and 154–155 contribute to the L-glutamine site; that span reads SL. Catalysis depends on for GATase activity residues histidine 198 and glutamate 200. The tract at residues 251–515 is indole-3-glycerol phosphate synthase; it reads ILQKIYAHRK…DATQFIRELC (265 aa). Residues 531–762 form an N-(5'-phosphoribosyl)anthranilate isomerase region; sequence LVKICGTRSA…EFVKAAKSVR (232 aa).

In terms of assembly, tetramer of two components I and two components II.

The enzyme catalyses chorismate + L-glutamine = anthranilate + pyruvate + L-glutamate + H(+). The catalysed reaction is N-(5-phospho-beta-D-ribosyl)anthranilate = 1-(2-carboxyphenylamino)-1-deoxy-D-ribulose 5-phosphate. It carries out the reaction 1-(2-carboxyphenylamino)-1-deoxy-D-ribulose 5-phosphate + H(+) = (1S,2R)-1-C-(indol-3-yl)glycerol 3-phosphate + CO2 + H2O. It functions in the pathway amino-acid biosynthesis; L-tryptophan biosynthesis; L-tryptophan from chorismate: step 1/5. The protein operates within amino-acid biosynthesis; L-tryptophan biosynthesis; L-tryptophan from chorismate: step 3/5. It participates in amino-acid biosynthesis; L-tryptophan biosynthesis; L-tryptophan from chorismate: step 4/5. Its function is as follows. Trifunctional enzyme bearing the Gln amidotransferase (GATase) domain of anthranilate synthase, indole-glycerolphosphate synthase, and phosphoribosylanthranilate isomerase activities. This chain is Multifunctional tryptophan biosynthesis protein (trp-1), found in Neurospora crassa (strain ATCC 24698 / 74-OR23-1A / CBS 708.71 / DSM 1257 / FGSC 987).